The chain runs to 127 residues: uncharacterized protein (127 aa).

This is an uncharacterized protein from Saccharomyces cerevisiae (strain ATCC 204508 / S288c) (Baker's yeast).